The following is a 480-amino-acid chain: tRNA-2-methylthio-N(6)-dimethylallyladenosine synthase (480 aa).

In terms of domain architecture, MTTase N-terminal spans 25–145 (GVFYVHTLGC…LPQLLDQARI (121 aa)). Residues Cys34, Cys74, Cys108, Cys182, Cys186, and Cys189 each coordinate [4Fe-4S] cluster. The 230-residue stretch at 168 to 397 (RASKVSSWVA…VALQERITEE (230 aa)) folds into the Radical SAM core domain. The region spanning 400 to 470 (KTFEGRDVEV…RHNLIADPNP (71 aa)) is the TRAM domain.

Belongs to the methylthiotransferase family. MiaB subfamily. As to quaternary structure, monomer. It depends on [4Fe-4S] cluster as a cofactor.

Its subcellular location is the cytoplasm. It carries out the reaction N(6)-dimethylallyladenosine(37) in tRNA + (sulfur carrier)-SH + AH2 + 2 S-adenosyl-L-methionine = 2-methylsulfanyl-N(6)-dimethylallyladenosine(37) in tRNA + (sulfur carrier)-H + 5'-deoxyadenosine + L-methionine + A + S-adenosyl-L-homocysteine + 2 H(+). Functionally, catalyzes the methylthiolation of N6-(dimethylallyl)adenosine (i(6)A), leading to the formation of 2-methylthio-N6-(dimethylallyl)adenosine (ms(2)i(6)A) at position 37 in tRNAs that read codons beginning with uridine. The protein is tRNA-2-methylthio-N(6)-dimethylallyladenosine synthase of Bifidobacterium adolescentis (strain ATCC 15703 / DSM 20083 / NCTC 11814 / E194a).